Reading from the N-terminus, the 314-residue chain is GDP-L-fucose synthase (314 aa).

Residues 15-21 and 109-112 each bind NADP(+); these read GHKGMVG and LGSS. Tyr-140 (proton donor/acceptor) is an active-site residue. NADP(+) contacts are provided by residues Lys-144, 167–170, and His-183; that span reads PTNL. Substrate-binding residues include Lys-191, Trp-206, Arg-213, and Asp-273.

This sequence belongs to the NAD(P)-dependent epimerase/dehydratase family. Fucose synthase subfamily.

The catalysed reaction is GDP-beta-L-fucose + NADP(+) = GDP-4-dehydro-alpha-D-rhamnose + NADPH + H(+). The protein operates within nucleotide-sugar biosynthesis; GDP-L-fucose biosynthesis via de novo pathway; GDP-L-fucose from GDP-alpha-D-mannose: step 2/2. In terms of biological role, catalyzes the two-step NADP-dependent conversion of GDP-4-dehydro-6-deoxy-D-mannose to GDP-fucose, involving an epimerase and a reductase reaction. The polypeptide is GDP-L-fucose synthase (Sinorhizobium fredii (strain NBRC 101917 / NGR234)).